Reading from the N-terminus, the 292-residue chain is Probable septum site-determining protein MinC (292 aa).

The interval 112–188 (DTAPPNDVAT…PQSSSALVIT (77 aa)) is disordered. The span at 128–137 (EATAEAAAKA) shows a compositional bias: low complexity. Residues 140 to 150 (QDDEAYGEQAD) are compositionally biased toward acidic residues. The span at 171-185 (ANRPTATPPQSSSAL) shows a compositional bias: polar residues.

The protein belongs to the MinC family. Interacts with MinD and FtsZ.

Functionally, cell division inhibitor that blocks the formation of polar Z ring septums. Rapidly oscillates between the poles of the cell to destabilize FtsZ filaments that have formed before they mature into polar Z rings. Prevents FtsZ polymerization. This chain is Probable septum site-determining protein MinC, found in Bordetella bronchiseptica (strain ATCC BAA-588 / NCTC 13252 / RB50) (Alcaligenes bronchisepticus).